The sequence spans 570 residues: Sulfite reductase [NADPH] hemoprotein beta-component (570 aa).

[4Fe-4S] cluster is bound by residues cysteine 434, cysteine 440, cysteine 479, and cysteine 483. Residue cysteine 483 participates in siroheme binding.

The protein belongs to the nitrite and sulfite reductase 4Fe-4S domain family. As to quaternary structure, alpha(8)-beta(8). The alpha component is a flavoprotein, the beta component is a hemoprotein. The cofactor is siroheme. Requires [4Fe-4S] cluster as cofactor.

The catalysed reaction is hydrogen sulfide + 3 NADP(+) + 3 H2O = sulfite + 3 NADPH + 4 H(+). Its pathway is sulfur metabolism; hydrogen sulfide biosynthesis; hydrogen sulfide from sulfite (NADPH route): step 1/1. Component of the sulfite reductase complex that catalyzes the 6-electron reduction of sulfite to sulfide. This is one of several activities required for the biosynthesis of L-cysteine from sulfate. The polypeptide is Sulfite reductase [NADPH] hemoprotein beta-component (Salmonella paratyphi A (strain ATCC 9150 / SARB42)).